Here is a 591-residue protein sequence, read N- to C-terminus: DDB1- and CUL4-associated factor 8 (591 aa).

Residues 1 to 25 (MSNKRPNTTDGRTDLANGSLSSSPE) are compositionally biased toward polar residues. The interval 1-140 (MSNKRPNTTD…EDWVSSETTA (140 aa)) is disordered. 2 positions are modified to phosphoserine: Ser-22 and Ser-23. The short motif at 40-51 (IEVEASDLSLSL) is the Nuclear export signal element. Basic and acidic residues-rich tracts occupy residues 66–100 (RGTDTESSGEEKDSDSMEDTGHYSINDESRGHGHS) and 118–131 (SRDQDSSDDERALE). Residues Ser-100, Ser-123, and Ser-124 each carry the phosphoserine modification. WD repeat units follow at residues 185-224 (GHTGCVNTLHFNQRGTWLASGSDDLKVVVWDWVRRQPVLD), 228-269 (GHKS…CCKN), 275-315 (QHKG…PASK), 323-363 (EKKV…ENEN), 379-418 (ESKANITCLVYSHDGTELLASYNDEDIYLFNSSHSDGAQY), 426-466 (RNNA…IIQF), and 470-509 (DKGGVVNCLEPHPHLPVLATSGLDHDVKIWAPTAEASTEL). Arg-198 bears the Omega-N-methylarginine; by PRMT1 mark. The disordered stretch occupies residues 552–591 (HRRWREPGVGATDADSDESPSSSDTSDEEEGPDRVQCMPS).

The protein belongs to the WD repeat DCAF8 family. As to quaternary structure, interacts with DDB1, CUL4A and CUL4B. Interacts with KPNA1, KPNB1 and XPO1. As to expression, expressed in the brain.

It is found in the nucleus. The protein localises to the cytoplasm. Its pathway is protein modification; protein ubiquitination. In terms of biological role, may function as a substrate receptor for CUL4-DDB1 E3 ubiquitin-protein ligase complex. The chain is DDB1- and CUL4-associated factor 8 (Dcaf8) from Mus musculus (Mouse).